Reading from the N-terminus, the 517-residue chain is Histone H4 transcription factor (517 aa).

3 C2H2-type zinc fingers span residues 15–39 (LQCEWGSCSFVCSTMEKFFEHVTQH), 129–153 (FLCLWEHCENSFDNPEWFYRHVEAH), and 169–193 (VLCGWKGCTCTFKDRSKLREHLRSH). The C2H2-type 4; degenerate zinc-finger motif lies at 199–221 (VACPTCGGMFANNTKFLDHIRRQ). 5 C2H2-type zinc fingers span residues 229 to 251 (FQCSHCSKRFATERLLRDHMRNH), 255 to 278 (YKCPLCDMTCPLPSSLRNHMRFRH), 284 to 306 (FKCDCCDYSCKNLIDLQKHLDTH), 312 to 337 (YRCDFENCTFSARSLCSIKSHYRKVH), and 345 to 368 (YKCHVCDKCFTRGNNLTVHLRKKH). Residues 373-517 (PSGHPRFRYK…IAEEPEIQMV (145 aa)) form an interaction with NPAT region. Positions 374–407 (SGHPRFRYKEHEDGYMRLQLVRYESVELTQQLLR) are required for activation of histone H4 transcription and contributes to DNA-binding. Positions 431 to 460 (TVPGEPGRKEEEEEGKGSEGTALSASQDNP) are disordered. Polar residues predominate over residues 451–460 (TALSASQDNP).

Binds MBD2 and a histone deacetylase complex. Interacts with NPAT. In terms of processing, ubiquitinated. Ubiquitination may lead to proteasome-mediated degradation. Ubiquitous. Highly expressed in brain, heart, skeletal muscle, spleen, kidney, small intestine, placenta and liver.

The protein resides in the nucleus. Functionally, transcriptional repressor that binds to the consensus sequence 5'-CGGACGTT-3' and to the RB1 promoter. Transcriptional activator that promotes histone H4 gene transcription at the G1/S phase transition in conjunction with NPAT. Also activates transcription of the ATM and PRKDC genes. Autoregulates its expression by associating with its own promoter. In Homo sapiens (Human), this protein is Histone H4 transcription factor (HINFP).